The sequence spans 216 residues: MNLILMGLPGAGKGTQAEQIVAKYNIPHISTGDMFRAAMKAETEMGLQAKSFIDKGALVPDEVTIGIVRERLSQEDCVRGFLLDGFPRTVAQASALEEIMKDLGKKIDYVLNINVDSGLLLKRLTGRRICKECGATYHLEFNPPAKADVCDKCGGELYQRSDDNEETVANRLDVNIKQTKPLLDFYEELGYLQSINGEQDINKVFADIDVLIGGLA.

10-15 (GAGKGT) contacts ATP. The tract at residues 30-59 (STGDMFRAAMKAETEMGLQAKSFIDKGALV) is NMP. Residues Thr-31, Arg-36, 57–59 (ALV), 85–88 (GFPR), and Gln-92 each bind AMP. The segment at 126–163 (GRRICKECGATYHLEFNPPAKADVCDKCGGELYQRSDD) is LID. Arg-127 contacts ATP. 2 residues coordinate Zn(2+): Cys-130 and Cys-133. 136–137 (TY) contacts ATP. Zn(2+)-binding residues include Cys-150 and Cys-153. Arg-160 and Arg-171 together coordinate AMP. ATP is bound at residue Gln-199.

Belongs to the adenylate kinase family. Monomer.

The protein localises to the cytoplasm. It catalyses the reaction AMP + ATP = 2 ADP. Its pathway is purine metabolism; AMP biosynthesis via salvage pathway; AMP from ADP: step 1/1. Catalyzes the reversible transfer of the terminal phosphate group between ATP and AMP. Plays an important role in cellular energy homeostasis and in adenine nucleotide metabolism. This is Adenylate kinase from Bacillus cereus (strain ATCC 10987 / NRS 248).